A 1293-amino-acid polypeptide reads, in one-letter code: Galactose/N-acetyl-D-galactosamine lectin heavy subunit 1 (1293 aa).

Residues Met1–Ala15 form the signal peptide. Topologically, residues Asp16–Thr1234 are extracellular. N-linked (GlcNAc...) asparagine glycosylation is found at Asn95, Asn198, Asn234, Asn261, Asn337, Asn377, Asn390, Asn468, Asn487, Asn643, Asn659, Asn890, Asn992, Asn1138, Asn1204, and Asn1214. Residues Thr1235–Phe1255 traverse the membrane as a helical segment. Residues Lys1256–Gly1293 are Cytoplasmic-facing.

As to quaternary structure, heterodimer composed of a 170 kDa heavy subunit (hgl) and a 31/35 kDa light subunit (lgl); disulfide-linked. N-glycosylated.

It localises to the cell membrane. Its function is as follows. Lectin which binds galactose and N-acetyl-D-galactosamine of host glycoproteins and thus mediates adhesion to host cells. Mediates adherence to host colonic mucins, an essential step for pathogenic tissue invasion. The sequence is that of Galactose/N-acetyl-D-galactosamine lectin heavy subunit 1 from Entamoeba histolytica (strain ATCC 30459 / HM-1:IMSS / ABRM).